A 92-amino-acid chain; its full sequence is Antifungal protein B (92 aa).

A signal peptide spans 1 to 18 (MQITSIAIVFFAAMGAVA). Positions 19-34 (NPIARESDDLDARDVQ) are excised as a propeptide. Cystine bridges form between Cys-42-Cys-70, Cys-49-Cys-77, and Cys-62-Cys-88.

It localises to the secreted. Its subcellular location is the host cytoplasm. Functionally, antifungal protein that acts as an inhibitor of growth of human pathogenic molds and yeasts. Is active against the model organism Neurospora crassa, the opportunistic human pathogens Aspergillus fumigatus, Trichophyton rubrum, and Aspergillus terreus. Provokes a reduction of the incidence of infections caused by Penicillium digitatum and Penicillium italicum in oranges and by Penicillium expansum in apples. Low doses of pafB have self-inhibition activity. Also shows activity against the model yeast Saccaromyces cerevisiae and the opportunistic human pathogen Candida albicans. No antibacterial activity is observed on the Gram-negative Escherichia coli and the Gram-positive Bacillus subtilis. Finally, also shows anti-viral activity in a model of HCoV 229E infected L132 cells. In Penicillium chrysogenum (Penicillium notatum), this protein is Antifungal protein B.